Reading from the N-terminus, the 241-residue chain is Uridylate kinase (241 aa).

Residue lysine 12–glycine 15 participates in ATP binding. The tract at residues glycine 20–glycine 25 is involved in allosteric activation by GTP. Position 54 (glycine 54) interacts with UMP. ATP is bound by residues glycine 55 and arginine 59. UMP contacts are provided by residues aspartate 74 and isoleucine 135 to threonine 142. ATP-binding residues include asparagine 163, tyrosine 169, and aspartate 172.

It belongs to the UMP kinase family. In terms of assembly, homohexamer.

It is found in the cytoplasm. It catalyses the reaction UMP + ATP = UDP + ADP. Its pathway is pyrimidine metabolism; CTP biosynthesis via de novo pathway; UDP from UMP (UMPK route): step 1/1. Its activity is regulated as follows. Allosterically activated by GTP. Inhibited by UTP. Its function is as follows. Catalyzes the reversible phosphorylation of UMP to UDP. This chain is Uridylate kinase, found in Streptococcus gordonii (strain Challis / ATCC 35105 / BCRC 15272 / CH1 / DL1 / V288).